The sequence spans 83 residues: uncharacterized protein (83 aa).

It belongs to the chlamydial CPn_0710/CT_666/TC_0037 family.

This is an uncharacterized protein from Chlamydia trachomatis serovar D (strain ATCC VR-885 / DSM 19411 / UW-3/Cx).